Here is a 263-residue protein sequence, read N- to C-terminus: Orotidine 5'-phosphate decarboxylase (263 aa).

Substrate-binding positions include aspartate 38, 60–62 (KTH), 91–100 (DRKFADIGNT), tyrosine 213, and arginine 232. Residue lysine 93 is the Proton donor of the active site.

This sequence belongs to the OMP decarboxylase family.

It carries out the reaction orotidine 5'-phosphate + H(+) = UMP + CO2. Its pathway is pyrimidine metabolism; UMP biosynthesis via de novo pathway; UMP from orotate: step 2/2. The sequence is that of Orotidine 5'-phosphate decarboxylase (PYR4) from Rhizomucor pusillus.